A 129-amino-acid chain; its full sequence is Cytochrome c' (129 aa).

7 residues coordinate heme c: arginine 12, glutamine 13, threonine 69, glutamate 70, cysteine 119, cysteine 122, and histidine 123.

Post-translationally, binds 1 heme c group covalently per subunit.

In terms of biological role, cytochrome c' is the most widely occurring bacterial c-type cytochrome. Cytochromes c' are high-spin proteins and the heme has no sixth ligand. Their exact function is not known. In Rubrivivax gelatinosus (Rhodocyclus gelatinosus), this protein is Cytochrome c'.